The primary structure comprises 493 residues: UDP-N-acetylmuramoyl-L-alanyl-D-glutamate--2,6-diaminopimelate ligase (493 aa).

Residues leucine 30 and serine 32 each coordinate UDP-N-acetyl-alpha-D-muramoyl-L-alanyl-D-glutamate. 117 to 123 (GTNGKTT) contacts ATP. UDP-N-acetyl-alpha-D-muramoyl-L-alanyl-D-glutamate-binding positions include asparagine 158, 159 to 160 (TT), serine 186, glutamine 192, and arginine 194. Lysine 226 carries the N6-carboxylysine modification. Meso-2,6-diaminopimelate is bound by residues arginine 388, 412–415 (DNPR), glycine 463, and glutamate 467. Residues 412-415 (DNPR) carry the Meso-diaminopimelate recognition motif motif.

The protein belongs to the MurCDEF family. MurE subfamily. Requires Mg(2+) as cofactor. Carboxylation is probably crucial for Mg(2+) binding and, consequently, for the gamma-phosphate positioning of ATP.

It is found in the cytoplasm. The catalysed reaction is UDP-N-acetyl-alpha-D-muramoyl-L-alanyl-D-glutamate + meso-2,6-diaminopimelate + ATP = UDP-N-acetyl-alpha-D-muramoyl-L-alanyl-gamma-D-glutamyl-meso-2,6-diaminopimelate + ADP + phosphate + H(+). The protein operates within cell wall biogenesis; peptidoglycan biosynthesis. Its function is as follows. Catalyzes the addition of meso-diaminopimelic acid to the nucleotide precursor UDP-N-acetylmuramoyl-L-alanyl-D-glutamate (UMAG) in the biosynthesis of bacterial cell-wall peptidoglycan. In Vibrio parahaemolyticus serotype O3:K6 (strain RIMD 2210633), this protein is UDP-N-acetylmuramoyl-L-alanyl-D-glutamate--2,6-diaminopimelate ligase.